A 338-amino-acid chain; its full sequence is Nodulation outer protein L (338 aa).

Over residues 1-14 (MDINSTSPLNASPQ) the composition is skewed to polar residues. Disordered stretches follow at residues 1-48 (MDIN…LPQV), 85-158 (TRER…DLET), 187-209 (SPAP…PHAR), and 230-259 (PQAG…SSAG). Over residues 85 to 97 (TRERSPHPSEQRP) the composition is skewed to basic and acidic residues. Positions 126–138 (VGPSRSGPSQAGL) are enriched in polar residues. A compositionally biased stretch (polar residues) spans 242–258 (SGPSQARPSHAWPSSSA).

Its subcellular location is the secreted. Functionally, putative symbiotic effector that modulates nodulation in legumes. When delivered into the plant cell, modulates the activity of signal transduction pathways that culminate in activation of PR proteins. The protein is Nodulation outer protein L (nopL) of Sinorhizobium fredii (strain NBRC 101917 / NGR234).